The chain runs to 229 residues: Uracil-DNA glycosylase (229 aa).

Asp70 serves as the catalytic Proton acceptor.

This sequence belongs to the uracil-DNA glycosylase (UDG) superfamily. UNG family.

It is found in the cytoplasm. The catalysed reaction is Hydrolyzes single-stranded DNA or mismatched double-stranded DNA and polynucleotides, releasing free uracil.. In terms of biological role, excises uracil residues from the DNA which can arise as a result of misincorporation of dUMP residues by DNA polymerase or due to deamination of cytosine. The chain is Uracil-DNA glycosylase from Chlamydia felis (strain Fe/C-56) (Chlamydophila felis).